The primary structure comprises 185 residues: Ribosome-recycling factor (185 aa).

Belongs to the RRF family.

It is found in the cytoplasm. In terms of biological role, responsible for the release of ribosomes from messenger RNA at the termination of protein biosynthesis. May increase the efficiency of translation by recycling ribosomes from one round of translation to another. The protein is Ribosome-recycling factor of Methylobacillus flagellatus (strain ATCC 51484 / DSM 6875 / VKM B-1610 / KT).